Consider the following 376-residue polypeptide: N-acetyldiaminopimelate deacetylase (376 aa).

D69 is an active-site residue. Residue E128 is the Proton acceptor of the active site.

It belongs to the peptidase M20A family. N-acetyldiaminopimelate deacetylase subfamily.

The catalysed reaction is N-acetyl-(2S,6S)-2,6-diaminopimelate + H2O = (2S,6S)-2,6-diaminopimelate + acetate. Its pathway is amino-acid biosynthesis; L-lysine biosynthesis via DAP pathway; LL-2,6-diaminopimelate from (S)-tetrahydrodipicolinate (acetylase route): step 3/3. Functionally, catalyzes the conversion of N-acetyl-diaminopimelate to diaminopimelate and acetate. The polypeptide is N-acetyldiaminopimelate deacetylase (Streptococcus uberis (strain ATCC BAA-854 / 0140J)).